The chain runs to 890 residues: Inner capsid protein VP2 (890 aa).

The interval 1 to 45 is disordered; the sequence is MAYRKRGVKRENLLQQNERLQEKEIENNTDVTMENKNNNRKQQLS. A 5-fold hub; involved in the encapsidation of VP1 and VP3 region spans residues 1–88; it reads MAYRKRGVKR…QLLEILKTKE (88 aa). A compositionally biased stretch (polar residues) spans 28–42; sequence NTDVTMENKNNNRKQ. Hydrophobic stretches follow at residues 404-424 and 432-452; these read LDFV…LTVI and ESLV…AFGM.

Belongs to the rotavirus VP2 family. As to quaternary structure, homodecamer; each decamer is made up of two conformers of VP2, called VP2A and VP2B. Interacts with a VP1-VP3 complex. Interacts with the intermediate capsid protein VP6. Interacts with NSP5. Interacts (via N-terminus) with NSP2. In terms of processing, sumoylated with SUMO1 and SUMO2. Sumoylation of viral proteins seems to have a positive role on viral replication.

The protein localises to the virion. In terms of biological role, inner capsid protein that self-assembles to form an icosahedral capsid with a T=2 symmetry, which consists of 120 copies of VP2, with channels at each of its five-fold vertices. This capsid constitutes the innermost concentric layer of the viral mature particle. It encapsidates the polymerase VP1, the capping enzyme VP3 and the genomic dsRNA, thereby defining the core. The innermost VP2 capsid and the intermediate VP6 capsid remain intact following cell entry to protect the dsRNA from degradation and to prevent unfavorable antiviral responses in the host cell during all the replication cycle of the virus. Nascent transcripts are transcribed within the structural confines of this double-layered particle (DLP) and are extruded through the channels formed by VP2 N-termini. VP2 is required for the replicase activity of VP1 polymerase. Probably recruits a copy of a VP1-VP3 complex, potentially along with a segment of plus-strand RNA, as a decamer of VP2 assembles. May activate the autoinhibited VP1/RNA complex to coordinate packaging and genome replication. This chain is Inner capsid protein VP2, found in Rotavirus A (isolate RVA/Human/United States/WI61/1983/G9P1A[8]) (RV-A).